Consider the following 227-residue polypeptide: Putative ankyrin repeat protein L45 (227 aa).

ANK repeat units lie at residues 38–66 (FETN…NINH), 78–107 (CLEE…NIFH), 108–137 (NENC…DVRA), 139–167 (NDYA…DVRS), 168–197 (CDSY…NYRA), and 199–227 (NHHA…GITK).

The protein is Putative ankyrin repeat protein L45 of Acanthamoeba polyphaga mimivirus (APMV).